A 338-amino-acid polypeptide reads, in one-letter code: MTCTIIVGGQWGDEGKGKVISYLCKKDNPSIIARGGVGPNAGHTVEVDGEKYGIRMVPTGFPNVNAKLAVGAGVLTDPEVLVREIEKLQKFNVGERIIIDYRCGVIESKHRDLDKSNEHLSKEIGSTGTGCGPANVDRAMRTLKLAKDVSELSKYLGDVSEAVNNAIESGDNVIIEGTQGSLLSLYYGSYPYVTSKDTNAASFAADVGLGPTKIDEVVAVFKSYPTRVGEGPFPTEMSLEEAEKLGVVEYGTVTGRRRRVGYFDFELAKKVCKLNGATQIAITCLDKYDPLCYGIIDYNELSEKGKAFIKEVEEKVGVRVTIISTGPELSQTIDIRNK.

GTP is bound by residues 12–18 (GDEGKGK) and 42–44 (GHT). Residue Asp-13 is the Proton acceptor of the active site. Mg(2+) contacts are provided by Asp-13 and Gly-42. IMP is bound by residues 13 to 16 (DEGK), 40 to 43 (NAGH), Thr-127, Arg-141, Gln-179, Thr-194, and Arg-256. Residue His-43 is the Proton donor of the active site. Substrate is bound at residue 252–258 (TVTGRRR). GTP-binding positions include Arg-258, 284-286 (CLD), and 324-326 (STG).

The protein belongs to the adenylosuccinate synthetase family. In terms of assembly, homodimer. Mg(2+) is required as a cofactor.

The protein localises to the cytoplasm. The catalysed reaction is IMP + L-aspartate + GTP = N(6)-(1,2-dicarboxyethyl)-AMP + GDP + phosphate + 2 H(+). The protein operates within purine metabolism; AMP biosynthesis via de novo pathway; AMP from IMP: step 1/2. Its function is as follows. Plays an important role in the de novo pathway of purine nucleotide biosynthesis. Catalyzes the first committed step in the biosynthesis of AMP from IMP. This is Adenylosuccinate synthetase from Methanococcus vannielii (strain ATCC 35089 / DSM 1224 / JCM 13029 / OCM 148 / SB).